The following is a 206-amino-acid chain: Small ribosomal subunit protein uS4A (206 aa).

Positions 98–163 (MRLDNVVYRL…SERFKMFAEN (66 aa)) constitute an S4 RNA-binding domain.

It belongs to the universal ribosomal protein uS4 family. In terms of assembly, part of the 30S ribosomal subunit. Contacts protein S5. The interaction surface between S4 and S5 is involved in control of translational fidelity.

Its function is as follows. One of the primary rRNA binding proteins, it binds directly to 16S rRNA where it nucleates assembly of the body of the 30S subunit. With S5 and S12 plays an important role in translational accuracy. This chain is Small ribosomal subunit protein uS4A, found in Clostridium perfringens (strain ATCC 13124 / DSM 756 / JCM 1290 / NCIMB 6125 / NCTC 8237 / Type A).